We begin with the raw amino-acid sequence, 331 residues long: UBX domain-containing protein 2B (331 aa).

2 stretches are compositionally biased toward basic and acidic residues: residues 1 to 16 (MAEG…ERGS) and 37 to 48 (DEMKCKSSKPDR). Positions 1-70 (MAEGGRAEPE…PHRLYSGDHK (70 aa)) are disordered. An N-acetylalanine modification is found at A2. S56 carries the post-translational modification Phosphoserine. T59 bears the Phosphothreonine mark. S66 bears the Phosphoserine mark. In terms of domain architecture, SEP spans 141 to 206 (DVQVLLKLWR…MEDHQDQEYI (66 aa)). 3 positions are modified to phosphoserine: S231, S234, and S235. In terms of domain architecture, UBX spans 252 to 329 (DSMPTTKIQI…DILNTVILQQ (78 aa)).

It belongs to the NSFL1C family. In terms of assembly, interacts with VCP. Does not bind ubiquitin.

Its subcellular location is the nucleus. The protein resides in the cytoplasm. It is found in the cytosol. It localises to the endoplasmic reticulum. The protein localises to the golgi apparatus. Its subcellular location is the cytoskeleton. The protein resides in the microtubule organizing center. It is found in the centrosome. Functionally, adapter protein required for Golgi and endoplasmic reticulum biogenesis. Involved in Golgi and endoplasmic reticulum maintenance during interphase and in their reassembly at the end of mitosis. The complex formed with VCP has membrane fusion activity; membrane fusion activity requires USO1-GOLGA2 tethering and BET1L. VCPIP1 is also required, but not its deubiquitinating activity. Together with NSFL1C/p47, regulates the centrosomal levels of kinase AURKA/Aurora A during mitotic progression by promoting AURKA removal from centrosomes in prophase. Also, regulates spindle orientation during mitosis. The polypeptide is UBX domain-containing protein 2B (Ubxn2b) (Mus musculus (Mouse)).